Here is a 429-residue protein sequence, read N- to C-terminus: Adenylosuccinate synthetase (429 aa).

GTP is bound by residues 12-18 (GDEGKGK) and 40-42 (GHT). The Proton acceptor role is filled by D13. Mg(2+)-binding residues include D13 and G40. IMP is bound by residues 13-16 (DEGK), 38-41 (NAGH), T129, R143, Q223, T238, and R302. H41 acts as the Proton donor in catalysis. A substrate-binding site is contributed by 298–304 (TVTGRPR). GTP contacts are provided by residues R304, 330 to 332 (KLD), and 412 to 414 (STS).

Belongs to the adenylosuccinate synthetase family. In terms of assembly, homodimer. Mg(2+) is required as a cofactor.

It localises to the cytoplasm. The catalysed reaction is IMP + L-aspartate + GTP = N(6)-(1,2-dicarboxyethyl)-AMP + GDP + phosphate + 2 H(+). It functions in the pathway purine metabolism; AMP biosynthesis via de novo pathway; AMP from IMP: step 1/2. Its function is as follows. Plays an important role in the de novo pathway of purine nucleotide biosynthesis. Catalyzes the first committed step in the biosynthesis of AMP from IMP. This Rhodospirillum rubrum (strain ATCC 11170 / ATH 1.1.1 / DSM 467 / LMG 4362 / NCIMB 8255 / S1) protein is Adenylosuccinate synthetase.